Here is a 258-residue protein sequence, read N- to C-terminus: Hydroxyacylglutathione hydrolase (258 aa).

Residues His56, His58, Asp60, His61, His112, Asp132, and His170 each coordinate Zn(2+).

Belongs to the metallo-beta-lactamase superfamily. Glyoxalase II family. In terms of assembly, monomer. Requires Zn(2+) as cofactor.

It carries out the reaction an S-(2-hydroxyacyl)glutathione + H2O = a 2-hydroxy carboxylate + glutathione + H(+). The protein operates within secondary metabolite metabolism; methylglyoxal degradation; (R)-lactate from methylglyoxal: step 2/2. In terms of biological role, thiolesterase that catalyzes the hydrolysis of S-D-lactoyl-glutathione to form glutathione and D-lactic acid. In Pseudomonas aeruginosa (strain LESB58), this protein is Hydroxyacylglutathione hydrolase.